A 330-amino-acid chain; its full sequence is tRNA N6-adenosine threonylcarbamoyltransferase (330 aa).

Positions 110 and 114 each coordinate Fe cation. Residues 133–137, D166, G179, D183, and N271 each bind substrate; that span reads MVSGG. D299 is a Fe cation binding site.

Belongs to the KAE1 / TsaD family. Requires Fe(2+) as cofactor.

It localises to the cytoplasm. It carries out the reaction L-threonylcarbamoyladenylate + adenosine(37) in tRNA = N(6)-L-threonylcarbamoyladenosine(37) in tRNA + AMP + H(+). Its function is as follows. Required for the formation of a threonylcarbamoyl group on adenosine at position 37 (t(6)A37) in tRNAs that read codons beginning with adenine. Is involved in the transfer of the threonylcarbamoyl moiety of threonylcarbamoyl-AMP (TC-AMP) to the N6 group of A37, together with TsaE and TsaB. TsaD likely plays a direct catalytic role in this reaction. In Thermosipho africanus (strain TCF52B), this protein is tRNA N6-adenosine threonylcarbamoyltransferase.